Here is a 304-residue protein sequence, read N- to C-terminus: Non-specific ribonucleoside hydrolase RihC (304 aa).

Residue His233 is part of the active site.

Belongs to the IUNH family. RihC subfamily.

Its function is as follows. Hydrolyzes both purine and pyrimidine ribonucleosides with a broad-substrate specificity. This Shigella dysenteriae serotype 1 (strain Sd197) protein is Non-specific ribonucleoside hydrolase RihC.